Consider the following 381-residue polypeptide: uncharacterized protein (381 aa).

9 helical membrane passes run 59–79, 84–104, 147–167, 190–210, 222–242, 250–270, 284–304, 311–331, and 344–364; these read LITLFGFISIIVSYFVTLYYM, GVAPKWLYLFNALCIFIYQTM, VGVNQISFFTTLWIMYVFFMA, SMMAGHIFTFFYGEQFWFNTI, LVLLVVILGGVGTILLNTFSI, ILTNIINLVPISILLGVSIYW, HYFMGIFGILFALVTGKLILA, LSPIQLIMLPLIAVILNIYKF, and VYFFVVFIVYIHFAYDVVTSL.

This sequence belongs to the CDP-alcohol phosphatidyltransferase class-I family.

It localises to the membrane. This is an uncharacterized protein from Dictyostelium discoideum (Social amoeba).